We begin with the raw amino-acid sequence, 89 residues long: Small ribosomal subunit protein uS17 (89 aa).

Belongs to the universal ribosomal protein uS17 family. In terms of assembly, part of the 30S ribosomal subunit.

In terms of biological role, one of the primary rRNA binding proteins, it binds specifically to the 5'-end of 16S ribosomal RNA. In Stenotrophomonas maltophilia (strain K279a), this protein is Small ribosomal subunit protein uS17.